A 202-amino-acid polypeptide reads, in one-letter code: UDP-N-acetylglucosamine transferase subunit ALG13 (202 aa).

The protein belongs to the glycosyltransferase 28 family. Heterodimer with ALG14 to form a functional enzyme.

The protein localises to the endoplasmic reticulum. The catalysed reaction is an N-acetyl-alpha-D-glucosaminyl-diphospho-di-trans,poly-cis-dolichol + UDP-N-acetyl-alpha-D-glucosamine = an N,N'-diacetylchitobiosyl-diphospho-di-trans,poly-cis-dolichol + UDP + H(+). Functionally, involved in protein N-glycosylation. Essential for the second step of the dolichol-linked oligosaccharide pathway. This is UDP-N-acetylglucosamine transferase subunit ALG13 (ALG13) from Saccharomyces cerevisiae (strain ATCC 204508 / S288c) (Baker's yeast).